Reading from the N-terminus, the 444-residue chain is Light-independent protochlorophyllide reductase subunit N (444 aa).

Residues cysteine 36, cysteine 61, and cysteine 118 each coordinate [4Fe-4S] cluster.

Belongs to the BchN/ChlN family. In terms of assembly, protochlorophyllide reductase is composed of three subunits; BchL, BchN and BchB. Forms a heterotetramer of two BchB and two BchN subunits. Requires [4Fe-4S] cluster as cofactor.

The catalysed reaction is chlorophyllide a + oxidized 2[4Fe-4S]-[ferredoxin] + 2 ADP + 2 phosphate = protochlorophyllide a + reduced 2[4Fe-4S]-[ferredoxin] + 2 ATP + 2 H2O. It functions in the pathway porphyrin-containing compound metabolism; bacteriochlorophyll biosynthesis (light-independent). Functionally, component of the dark-operative protochlorophyllide reductase (DPOR) that uses Mg-ATP and reduced ferredoxin to reduce ring D of protochlorophyllide (Pchlide) to form chlorophyllide a (Chlide). This reaction is light-independent. The NB-protein (BchN-BchB) is the catalytic component of the complex. This is Light-independent protochlorophyllide reductase subunit N from Chloroflexus aurantiacus (strain ATCC 29366 / DSM 635 / J-10-fl).